Reading from the N-terminus, the 699-residue chain is Mannan-binding lectin serine protease 1 (699 aa).

Residues 1-19 (MRWLLLYYALCFSLSKASA) form the signal peptide. A CUB 1 domain is found at 20–138 (HTVELNNMFG…TGFDAHYMAV (119 aa)). The interval 20-184 (HTVELNNMFG…HTDNRTCRVE (165 aa)) is homodimerization. The interval 20–184 (HTVELNNMFG…HTDNRTCRVE (165 aa)) is interaction with MBL2. Positions 20-278 (HTVELNNMFG…STQSHSVLIL (259 aa)) are interaction with FCN2. N-linked (GlcNAc...) asparagine glycosylation is present at Asn49. Ca(2+) is bound by residues Glu68, Asp76, Asp121, Ser123, Asp139, Val140, and Glu142. A disulfide bridge connects residues Cys73 and Cys91. The EGF-like; calcium-binding domain maps to 139–182 (DVDECKEREDEELSCDHYCHNYIGGYYCSCRFGYILHTDNRTCR). Cystine bridges form between Cys143/Cys157, Cys153/Cys166, Cys168/Cys181, and Cys185/Cys212. Ca(2+) contacts are provided by Asn159, Tyr160, and Gly163. At Asn159 the chain carries (3R)-3-hydroxyasparagine. The N-linked (GlcNAc...) (complex) asparagine glycan is linked to Asn178. A CUB 2 domain is found at 185 to 297 (CSDNLFTQRT…RGWRLSYRAA (113 aa)). Ca(2+)-binding residues include Glu235, Asp245, Asp282, and Ser284. Cys242 and Cys260 are oxidised to a cystine. 2 Sushi domains span residues 299–364 (NECP…TCKI) and 365–434 (VDCR…TCLP). Cystine bridges form between Cys301–Cys349, Cys329–Cys362, Cys367–Cys414, Cys397–Cys432, Cys436–Cys572, and Cys475–Cys491. N-linked (GlcNAc...) (complex) asparagine glycosylation is present at Asn385. Residue Asn407 is glycosylated (N-linked (GlcNAc...) asparagine). Residues 449–696 (IFNGRPAQKG…NKDWIQRVTG (248 aa)) enclose the Peptidase S1 domain. The active-site Charge relay system is the His490. N-linked (GlcNAc) asparagine glycosylation is present at Leu533. Asp552 acts as the Charge relay system in catalysis. Residue Glu599 is glycosylated (N-linked (GlcNAc) asparagine). Disulfide bonds link Cys614/Cys631 and Cys642/Cys672. Ser646 acts as the Charge relay system in catalysis.

The protein belongs to the peptidase S1 family. In terms of assembly, homodimer. Interacts with the oligomeric lectins MBL2, FCN2 and FCN3; triggers the lectin pathway of complement through activation of C3. Interacts with SERPING1. Interacts with COLEC11; probably triggers the lectin pathway of complement. The iron and 2-oxoglutarate dependent 3-hydroxylation of aspartate and asparagine is (R) stereospecific within EGF domains. Post-translationally, N-glycosylated. Some N-linked glycan are of the complex-type. In terms of processing, autoproteolytic processing of the proenzyme produces the active enzyme composed on the heavy and the light chain held together by a disulfide bond. Isoform 1 but not isoform 2 is activated through autoproteolytic processing. In terms of tissue distribution, protein of the plasma which is primarily expressed by liver.

It localises to the secreted. Inhibited by SERPING1 and A2M. Functions in the lectin pathway of complement, which performs a key role in innate immunity by recognizing pathogens through patterns of sugar moieties and neutralizing them. The lectin pathway is triggered upon binding of mannan-binding lectin (MBL) and ficolins to sugar moieties which leads to activation of the associated proteases MASP1 and MASP2. Functions as an endopeptidase and may activate MASP2 or C2 or directly activate C3 the key component of complement reaction. Isoform 2 may have an inhibitory effect on the activation of the lectin pathway of complement or may cleave IGFBP5. Also plays a role in development. The polypeptide is Mannan-binding lectin serine protease 1 (MASP1) (Homo sapiens (Human)).